Here is a 389-residue protein sequence, read N- to C-terminus: Formate-dependent phosphoribosylglycinamide formyltransferase (389 aa).

N(1)-(5-phospho-beta-D-ribosyl)glycinamide is bound by residues 21-22 and Glu81; that span reads EL. Residues Arg113, Lys154, 159-164, 194-197, and Glu202 each bind ATP; these read SSGKGQ and EEFI. Residues 118-307 enclose the ATP-grasp domain; sequence RLAAEKLGLK…EFEIHVRAIL (190 aa). Glu266 and Glu278 together coordinate Mg(2+). N(1)-(5-phospho-beta-D-ribosyl)glycinamide-binding positions include Asp285, Lys353, and 360-361; that span reads RR.

Belongs to the PurK/PurT family. As to quaternary structure, homodimer.

The enzyme catalyses N(1)-(5-phospho-beta-D-ribosyl)glycinamide + formate + ATP = N(2)-formyl-N(1)-(5-phospho-beta-D-ribosyl)glycinamide + ADP + phosphate + H(+). It functions in the pathway purine metabolism; IMP biosynthesis via de novo pathway; N(2)-formyl-N(1)-(5-phospho-D-ribosyl)glycinamide from N(1)-(5-phospho-D-ribosyl)glycinamide (formate route): step 1/1. In terms of biological role, involved in the de novo purine biosynthesis. Catalyzes the transfer of formate to 5-phospho-ribosyl-glycinamide (GAR), producing 5-phospho-ribosyl-N-formylglycinamide (FGAR). Formate is provided by PurU via hydrolysis of 10-formyl-tetrahydrofolate. In Methanocaldococcus jannaschii (strain ATCC 43067 / DSM 2661 / JAL-1 / JCM 10045 / NBRC 100440) (Methanococcus jannaschii), this protein is Formate-dependent phosphoribosylglycinamide formyltransferase.